Reading from the N-terminus, the 389-residue chain is MGGMQVQITNLTEWLADQGVRQDVLTTGIPGIPRTLQLRDRLTVHSVRFMTLPFKSSQTGTVFLDQSWFMGAVKWIVLNGKKNNYDAIHVHASGVVWPLLAGMFAQKYLKKPLILTIHCSRIFTYKPMNKWDQFVHDFVKSVELKSIKLSHKAVVLTDKRLDSYNRLLEDSSKMTAISDCIGSNHLSHSIDCPFCSRLKTELLGKKTVLFLGRIAHEKGWSTFVSVAKELADKIGDLQFIVCGDGPQREAMEEQIKAANLQNQFRITGFISHKFVSCYLHHAQLFLLPSHHEEFGGSLIEAAIAGVPIISTNNGGPADIFTHGETAILKDPGDVSGIADEAYKILTNDSVAESLRLHSRPEVVSKFLPHCVYPNYLNLYSSKEAAVHEG.

The protein belongs to the glycosyltransferase group 1 family.

It carries out the reaction 2-deoxystreptamine + UDP-N-acetyl-alpha-D-glucosamine = 2'-N-acetylparomamine + UDP + H(+). The protein operates within antibiotic biosynthesis; butirosin biosynthesis. In terms of biological role, glycosyltransferase involved in the biosynthesis of butirosin by mediating conversion of 2-deoxystreptamine (2-DOS) to 2'-N-acetylparomamine using UDP-alpha-D-glucosamine as sugar donor. In Niallia circulans (Bacillus circulans), this protein is 2-deoxystreptamine N-acetyl-D-glucosaminyltransferase (btrM).